Consider the following 362-residue polypeptide: C-C chemokine receptor type 10 (362 aa).

At 1 to 48 (MGTKPTEQVSWGLYSGYDEEAYSVGPLPELCYKADVQAFSRAFQPSVS) the chain is on the extracellular side. The helical transmembrane segment at 49-69 (LMVAVLGLAGNGLVLATHLAA) threads the bilayer. At 70 to 80 (RRTTRSPTSVH) the chain is on the cytoplasmic side. A helical transmembrane segment spans residues 81 to 101 (LLQLALADLLLALTLPFAAAG). Topologically, residues 102 to 115 (ALQGWNLGSTTCRA) are extracellular. Cys113 and Cys191 form a disulfide bridge. The helical transmembrane segment at 116-136 (ISGLYSASFHAGFLFLACISA) threads the bilayer. The Cytoplasmic segment spans residues 137–159 (DRYVAIARALPAGQRPSTPSRAH). A helical membrane pass occupies residues 160–180 (LVSVFVWLLSLFLALPALLFS). The Extracellular portion of the chain corresponds to 181–208 (RDGPREGQRRCRLIFPESLTQTVKGASA). Residues 209–229 (VAQVVLGFALPLGVMAACYAL) traverse the membrane as a helical segment. At 230–247 (LGRTLLAARGPERRRALR) the chain is on the cytoplasmic side. The chain crosses the membrane as a helical span at residues 248-268 (VVVALVVAFVVLQLPYSLALL). The Extracellular segment spans residues 269–291 (LDTADLLAARERSCSSSKRKDLA). A helical transmembrane segment spans residues 292–312 (LLVTGGLTLVRCSLNPVLYAF). The Cytoplasmic portion of the chain corresponds to 313-362 (LGLRFRRDLRRLLQGGGCSPKPNPRGRCPRRLRLSSCSAPTETHSLSWDN).

The protein belongs to the G-protein coupled receptor 1 family. In terms of tissue distribution, expressed at high levels in small intestine, colon, lymph nodes, Peyer patches and at lower levels in thymus, lung and spleen.

The protein localises to the cell membrane. In terms of biological role, receptor for chemokines SCYA27 and SCYA28. Subsequently transduces a signal by increasing the intracellular calcium ions level. The sequence is that of C-C chemokine receptor type 10 (Ccr10) from Mus musculus (Mouse).